We begin with the raw amino-acid sequence, 353 residues long: Melatonin receptor type 1A (353 aa).

The span at 1–15 shows a compositional bias: polar residues; sequence MKGNGSTLLNASQQA. Residues 1–23 are disordered; the sequence is MKGNGSTLLNASQQAPGVGEGGG. Topologically, residues 1–32 are extracellular; sequence MKGNGSTLLNASQQAPGVGEGGGPRPSWLAST. Residues Asn-4 and Asn-10 are each glycosylated (N-linked (GlcNAc...) asparagine). Residues 33–53 form a helical membrane-spanning segment; the sequence is LAFILIFTIVVDILGNLLVIL. Over 54–66 the chain is Cytoplasmic; it reads SVYRNKKLRNAGN. The helical transmembrane segment at 67–87 threads the bilayer; that stretch reads IFVVSLAIADLVVAIYPYPLV. Residues 88-105 are Extracellular-facing; the sequence is LTSIFNNGWNLGYLHCQI. The cysteines at positions 103 and 180 are disulfide-linked. A helical membrane pass occupies residues 106–126; that stretch reads SAFLMGLSVIGSIFNITGIAI. At 127–147 the chain is on the cytoplasmic side; that stretch reads NRYCYICHSLKYDRLYSNKNS. The chain crosses the membrane as a helical span at residues 148–168; sequence LCYVFLIWVLTLVAIMPNLQT. Residues 169 to 190 lie on the Extracellular side of the membrane; it reads GTLQYDPRIYSCTFTQSVSSAY. Residues 191–211 traverse the membrane as a helical segment; it reads TIAVVVFHFIVPMIIVIFCYL. The Cytoplasmic segment spans residues 212–243; that stretch reads RIWILVLQVRRRVKPDSKPRLKPQDFRNFVTM. The helical transmembrane segment at 244-264 threads the bilayer; it reads FVVFVLFAICWAPLNFIGLIV. The Extracellular portion of the chain corresponds to 265–277; the sequence is ASDPATMAPRIPE. A helical transmembrane segment spans residues 278 to 298; sequence WLFVASYYMAYFNSCLNAIIY. Residues 299-353 are Cytoplasmic-facing; the sequence is GLLNQNFRQEYKRILVSLFTAKMCFVDSSNDPADKIKCKPAPLIANNNLIKVDSV.

This sequence belongs to the G-protein coupled receptor 1 family. At least in the brain, more precisely in the pars tuberalis and the suprachiasmatic nucleus.

The protein localises to the cell membrane. Functionally, high affinity receptor for melatonin. Likely to mediate the reproductive and circadian actions of melatonin. The activity of this receptor is mediated by pertussis toxin sensitive G proteins that inhibit adenylate cyclase activity. Possibly involved in sleep induction, by melatonin activation of the potassium channel KCNMA1/BK and the dissociation of G-beta and G-gamma subunits, thereby decreasing synaptic transmission. The sequence is that of Melatonin receptor type 1A (MTNR1A) from Phodopus sungorus (Striped hairy-footed hamster).